The sequence spans 247 residues: Small ribosomal subunit protein uS2 (247 aa).

The protein belongs to the universal ribosomal protein uS2 family.

The polypeptide is Small ribosomal subunit protein uS2 (Fusobacterium nucleatum subsp. nucleatum (strain ATCC 25586 / DSM 15643 / BCRC 10681 / CIP 101130 / JCM 8532 / KCTC 2640 / LMG 13131 / VPI 4355)).